Consider the following 297-residue polypeptide: ATP phosphoribosyltransferase (297 aa).

It belongs to the ATP phosphoribosyltransferase family.

It localises to the cytoplasm. The catalysed reaction is 1-(5-phospho-beta-D-ribosyl)-ATP + diphosphate = 5-phospho-alpha-D-ribose 1-diphosphate + ATP. It functions in the pathway amino-acid biosynthesis; L-histidine biosynthesis; L-histidine from 5-phospho-alpha-D-ribose 1-diphosphate: step 1/9. In terms of biological role, catalyzes the condensation of ATP and 5-phosphoribose 1-diphosphate to form N'-(5'-phosphoribosyl)-ATP (PR-ATP). Has a crucial role in the pathway because the rate of histidine biosynthesis seems to be controlled primarily by regulation of the enzymatic activity. In Kluyveromyces lactis (strain ATCC 8585 / CBS 2359 / DSM 70799 / NBRC 1267 / NRRL Y-1140 / WM37) (Yeast), this protein is ATP phosphoribosyltransferase (HIS1).